Reading from the N-terminus, the 484-residue chain is tRNA sulfurtransferase (484 aa).

In terms of domain architecture, THUMP spans 63-167 (ELFAERLAHI…RDKLYMVSQR (105 aa)). ATP is bound by residues 185–186 (LI), lysine 267, glycine 289, and glutamine 298. Cysteines 346 and 458 form a disulfide. Positions 406-484 (AAGNEVIIDI…GYNNVKVYRP (79 aa)) constitute a Rhodanese domain. Cysteine 458 (cysteine persulfide intermediate) is an active-site residue.

This sequence belongs to the ThiI family.

The protein resides in the cytoplasm. It catalyses the reaction [ThiI sulfur-carrier protein]-S-sulfanyl-L-cysteine + a uridine in tRNA + 2 reduced [2Fe-2S]-[ferredoxin] + ATP + H(+) = [ThiI sulfur-carrier protein]-L-cysteine + a 4-thiouridine in tRNA + 2 oxidized [2Fe-2S]-[ferredoxin] + AMP + diphosphate. It carries out the reaction [ThiS sulfur-carrier protein]-C-terminal Gly-Gly-AMP + S-sulfanyl-L-cysteinyl-[cysteine desulfurase] + AH2 = [ThiS sulfur-carrier protein]-C-terminal-Gly-aminoethanethioate + L-cysteinyl-[cysteine desulfurase] + A + AMP + 2 H(+). Its pathway is cofactor biosynthesis; thiamine diphosphate biosynthesis. In terms of biological role, catalyzes the ATP-dependent transfer of a sulfur to tRNA to produce 4-thiouridine in position 8 of tRNAs, which functions as a near-UV photosensor. Also catalyzes the transfer of sulfur to the sulfur carrier protein ThiS, forming ThiS-thiocarboxylate. This is a step in the synthesis of thiazole, in the thiamine biosynthesis pathway. The sulfur is donated as persulfide by IscS. The protein is tRNA sulfurtransferase of Shewanella amazonensis (strain ATCC BAA-1098 / SB2B).